Consider the following 748-residue polypeptide: Polyribonucleotide nucleotidyltransferase (748 aa).

Residues aspartate 487 and aspartate 493 each contribute to the Mg(2+) site. Residues 554 to 613 (PSTTTIKIDKDKIRDIIGPGGKVIKEICETSGAKIDISDDGTVSVYASDRDKLKVALDKI) enclose the KH domain. An S1 motif domain is found at 623 to 691 (GEIFNGTVVK…NKGKAKLTIK (69 aa)). Residues 695 to 733 (KDKFSNNTKPKTSVNNTKDNSEPEQRHDSSKKRAWNEDN) are disordered. Residues 699–712 (SNNTKPKTSVNNTK) show a composition bias toward polar residues. Residues 713 to 722 (DNSEPEQRHD) are compositionally biased toward basic and acidic residues.

It belongs to the polyribonucleotide nucleotidyltransferase family. Mg(2+) is required as a cofactor.

The protein resides in the cytoplasm. It catalyses the reaction RNA(n+1) + phosphate = RNA(n) + a ribonucleoside 5'-diphosphate. Functionally, involved in mRNA degradation. Catalyzes the phosphorolysis of single-stranded polyribonucleotides processively in the 3'- to 5'-direction. The chain is Polyribonucleotide nucleotidyltransferase from Rickettsia rickettsii (strain Iowa).